The sequence spans 80 residues: DNA-binding protein HU-like (80 aa).

The protein belongs to the bacterial histone-like protein family.

In terms of biological role, histone-like DNA-binding protein which is capable of wrapping DNA to stabilize it, and thus to prevent its denaturation under extreme environmental conditions. In Rickettsia prowazekii (strain Madrid E), this protein is DNA-binding protein HU-like.